The primary structure comprises 513 residues: Histidine ammonia-lyase (513 aa).

Residues 144-146 constitute a cross-link (5-imidazolinone (Ala-Gly)); sequence ASG. The residue at position 145 (Ser145) is a 2,3-didehydroalanine (Ser).

The protein belongs to the PAL/histidase family. Post-translationally, contains an active site 4-methylidene-imidazol-5-one (MIO), which is formed autocatalytically by cyclization and dehydration of residues Ala-Ser-Gly.

The protein resides in the cytoplasm. The enzyme catalyses L-histidine = trans-urocanate + NH4(+). The protein operates within amino-acid degradation; L-histidine degradation into L-glutamate; N-formimidoyl-L-glutamate from L-histidine: step 1/3. This Streptococcus gordonii (strain Challis / ATCC 35105 / BCRC 15272 / CH1 / DL1 / V288) protein is Histidine ammonia-lyase.